A 335-amino-acid chain; its full sequence is Serine protease 42 (335 aa).

The signal sequence occupies residues 1–24 (MASGGGSLGLIVFLLLLQPKPCEA). A glycan (N-linked (GlcNAc...) asparagine) is linked at Asn67. The region spanning 79–315 (IMGGVDAEEG…YSKWLIAVVN (237 aa)) is the Peptidase S1 domain. The cysteines at positions 104 and 120 are disulfide-linked. His119 acts as the Charge relay system in catalysis. N-linked (GlcNAc...) asparagine glycosylation occurs at Asn140. Catalysis depends on Asp165, which acts as the Charge relay system. N-linked (GlcNAc...) asparagine glycosylation is present at Asn176. 3 disulfide bridges follow: Cys199–Cys273, Cys232–Cys253, and Cys263–Cys291. The active-site Charge relay system is the Ser267.

The protein belongs to the peptidase S1 family. In terms of tissue distribution, testis-specific. Mainly detected in round spermatids at all the eminiferous epithelial stages (at protein level).

It localises to the cytoplasm. The protein resides in the cell membrane. Functionally, plays a role in spermatogenesis. Involved in germ cell survival during meiosis. Lacks protease activity in vitro. This is Serine protease 42 from Mus musculus (Mouse).